A 962-amino-acid chain; its full sequence is Glycine dehydrogenase (decarboxylating) (962 aa).

An N6-(pyridoxal phosphate)lysine modification is found at K710.

This sequence belongs to the GcvP family. As to quaternary structure, the glycine cleavage system is composed of four proteins: P, T, L and H. Pyridoxal 5'-phosphate is required as a cofactor.

The enzyme catalyses N(6)-[(R)-lipoyl]-L-lysyl-[glycine-cleavage complex H protein] + glycine + H(+) = N(6)-[(R)-S(8)-aminomethyldihydrolipoyl]-L-lysyl-[glycine-cleavage complex H protein] + CO2. Functionally, the glycine cleavage system catalyzes the degradation of glycine. The P protein binds the alpha-amino group of glycine through its pyridoxal phosphate cofactor; CO(2) is released and the remaining methylamine moiety is then transferred to the lipoamide cofactor of the H protein. The polypeptide is Glycine dehydrogenase (decarboxylating) (Idiomarina loihiensis (strain ATCC BAA-735 / DSM 15497 / L2-TR)).